Consider the following 538-residue polypeptide: MFCYQCEQTAKGLGCDKIGVCGKQPDVSDLQDLLVYALTGLAQAAVAAKAEGVAVPLETGRYFAKAMFSTLTNVNFDAADFVPLINEAVAKRKALAALIKAQLPEGPASYVPALDLAGLIAQGHIHGLKDIPETNDDIRSLKHTLIFGIKGIAAYADHAAILGQEDPAVYEFLYEGMAATFTTDKDLGAWVALVLKCGEVNLRAMELLDAANTGAYGHPVPTVVPLGHKAGKAILVSGHDLKDLKQLLEQTAGKGINIYTHGEMLPAHGYPELKKYPHFHGHYGTAWQNQHKEFAAFPGAILMTTNCIQKPAESYLGSIFTTGLVGWPGAVHVKNGEFGPVIEKALAMPGFAADEDKGTVMTGFARNAVMSVAGTVIDAVKAGKIRHFFLVAGCDGAKPGRNYYTEFVEKAPADTIVLTLACGKFRFFDKQLGDIGGIPRLLDMGQCNDAYSAIQVAVALAGAFNCGVNDLPLSMVLSWYEQKAVAILLTLLHLGVKNIRLGPSLPAFLTPNVLNFLVANYDIKPISTPDEDLKAILG.

4 residues coordinate [4Fe-4S] cluster: Cys3, Cys6, Cys15, and Cys21. Hybrid [4Fe-2O-2S] cluster contacts are provided by His239, Glu263, Cys307, Cys394, Cys422, Cys447, Glu481, and Lys483. Cys394 carries the cysteine persulfide modification.

It belongs to the HCP family. [4Fe-4S] cluster serves as cofactor. Requires hybrid [4Fe-2O-2S] cluster as cofactor.

The protein resides in the cytoplasm. It carries out the reaction A + NH4(+) + H2O = hydroxylamine + AH2 + H(+). In terms of biological role, catalyzes the reduction of hydroxylamine to form NH(3) and H(2)O. In Solidesulfovibrio magneticus (strain ATCC 700980 / DSM 13731 / RS-1) (Desulfovibrio magneticus), this protein is Hydroxylamine reductase.